The primary structure comprises 316 residues: D-alanine--D-alanine ligase (316 aa).

One can recognise an ATP-grasp domain in the interval 107 to 303 (KEVFAARGLT…FEDLVERILI (197 aa)). 133-188 (AEGFGYPVVVKPSQEGSSVGVSIVKSPEELPSALELAFRYDDDILVERFIKGREIQ) contributes to the ATP binding site. Mg(2+) contacts are provided by D256, E269, and N271.

Belongs to the D-alanine--D-alanine ligase family. Requires Mg(2+) as cofactor. It depends on Mn(2+) as a cofactor.

Its subcellular location is the cytoplasm. The catalysed reaction is 2 D-alanine + ATP = D-alanyl-D-alanine + ADP + phosphate + H(+). It participates in cell wall biogenesis; peptidoglycan biosynthesis. Cell wall formation. This chain is D-alanine--D-alanine ligase, found in Geobacter sulfurreducens (strain ATCC 51573 / DSM 12127 / PCA).